The primary structure comprises 405 residues: Arginine biosynthesis bifunctional protein ArgJ (405 aa).

The substrate site is built by threonine 152, lysine 178, threonine 189, glutamate 276, asparagine 400, and serine 405. Threonine 189 functions as the Nucleophile in the catalytic mechanism.

The protein belongs to the ArgJ family. Heterotetramer of two alpha and two beta chains.

It localises to the cytoplasm. It catalyses the reaction N(2)-acetyl-L-ornithine + L-glutamate = N-acetyl-L-glutamate + L-ornithine. The enzyme catalyses L-glutamate + acetyl-CoA = N-acetyl-L-glutamate + CoA + H(+). The protein operates within amino-acid biosynthesis; L-arginine biosynthesis; L-ornithine and N-acetyl-L-glutamate from L-glutamate and N(2)-acetyl-L-ornithine (cyclic): step 1/1. Its pathway is amino-acid biosynthesis; L-arginine biosynthesis; N(2)-acetyl-L-ornithine from L-glutamate: step 1/4. Catalyzes two activities which are involved in the cyclic version of arginine biosynthesis: the synthesis of N-acetylglutamate from glutamate and acetyl-CoA as the acetyl donor, and of ornithine by transacetylation between N(2)-acetylornithine and glutamate. This is Arginine biosynthesis bifunctional protein ArgJ from Chromobacterium violaceum (strain ATCC 12472 / DSM 30191 / JCM 1249 / CCUG 213 / NBRC 12614 / NCIMB 9131 / NCTC 9757 / MK).